The chain runs to 573 residues: Glutathione hydrolase 5 proenzyme (573 aa).

At 1 to 8 the chain is on the cytoplasmic side; that stretch reads MAWGHRAT. The helical; Signal-anchor for type II membrane protein transmembrane segment at 9-29 threads the bilayer; it reads VCLVLLGVGLGLVIVVLAAVL. At 30-573 the chain is on the extracellular side; that stretch reads SPRQASCGPG…LRKAGKASGY (544 aa). Asn98 is a glycosylation site (N-linked (GlcNAc...) asparagine). L-glutamate is bound at residue Arg110. N-linked (GlcNAc...) asparagine glycans are attached at residues Asn185, Asn204, Asn277, Asn303, Asn347, and Asn378. The active-site Nucleophile is the Thr389. Residues Thr407, Glu428, and 454 to 455 contribute to the L-glutamate site; that span reads SS.

This sequence belongs to the gamma-glutamyltransferase family. In terms of assembly, heterodimer composed of the light and heavy chains. The active site is located in the light chain. Post-translationally, cleaved by autocatalysis into a large and a small subunit. In terms of processing, glycosylated. As to expression, very low level of expression. Detected in spleen lymphocytes, medullary and paracortical thymic lymphocytes, lung interstitial cells, bronchial epithelium, proximal tubules in kidney, crypt cells in small intestine, neurons in brain stem and cerebral cortex and in Purkinje cells. Very low expression.

The protein localises to the membrane. It catalyses the reaction glutathione + H2O = L-cysteinylglycine + L-glutamate. The enzyme catalyses an S-substituted glutathione + H2O = an S-substituted L-cysteinylglycine + L-glutamate. It carries out the reaction leukotriene C4 + H2O = leukotriene D4 + L-glutamate. The catalysed reaction is S-[(2E,6E,10E)-geranylgeranyl]-L-glutathione + H2O = S-[(2E,6E,10E)-geranylgeranyl]-L-cysteinylglycine + L-glutamate. It catalyses the reaction an N-terminal (5-L-glutamyl)-[peptide] + an alpha-amino acid = 5-L-glutamyl amino acid + an N-terminal L-alpha-aminoacyl-[peptide]. The protein operates within lipid metabolism; leukotriene D4 biosynthesis. It functions in the pathway sulfur metabolism; glutathione metabolism. Inhibited by serine-borate. Cleaves the gamma-glutamyl bond of extracellular glutathione tripeptide (gamma-Glu-Cys-Gly) and certain glutathione conjugates. Hydrolyzes glutathione releasing L-Glu and Cys-Gly dipeptide which is further metabolized to maintain extracellular cysteine levels but also to provide cysteine necessary for intracellular glutathione synthesis. Among glutathione-S-conjugates metabolizes leukotriene C4 (LTC4) and S-geranylgeranyl-glutathione (GGG), but is inactive toward gamma-glutamyl leucine. Converts extracellular LTC4 to LTD4 during acute inflammatory response. Acts as a negative regulator of GGG bioactivity. GGT5 (via GGG catabolism) and ABCC1 (via extracellular transport) establish GGG gradients within lymphoid tissues to position P2RY8-positive lymphocytes at germinal centers in lymphoid follicles and restrict their chemotactic transmigration from blood vessels to bone marrow parenchyma. The transpeptidation reaction, i.e. the transfer of gamma-glutamyl moiety to an acceptor molecule to yield a new gamma-glutamyl compound requires high concentration of dipeptide acceptor and is considered nonphysiological. In Mus musculus (Mouse), this protein is Glutathione hydrolase 5 proenzyme (Ggt5).